Consider the following 313-residue polypeptide: MAITRSSLAICLILSLVTITTADYYSPSSPPVYKSPEHKPTLPSPVYTPPVYKPTLSPPVYTKPTIPPPVYTPPVYKHTPSPPVYTKPTIPPPVYTPPVYKPTLSPPVYTKPTIPPPVYTPPVYKPTPVYTKPTIPPPVYTPPVYKPTPSPPVYKKSPSYSSPPPPYVPKPTYTPTTKPYVPEILKAVDGIILCKNGYETYPILGAKIQIVCSDPASYGKSNTEVVIYSNPTDSKGYFHLSLTSIKDLAYCRVKLYLSPVETCKNPTNVNKGLTGVPLALYGYRFYPDKNLELFSVGPFYYTGPKAAPATPKY.

A signal peptide spans M1–A22. Residues P27 to K312 are 35 X 5 AA approximate repeats. Tandem repeats lie at residues P30 to K34, S35 to K39, P40 to P43, S44 to T48, P49 to K53, P54 to S57, P58 to T62, P64 to P67, P68 to T72, P73 to K77, P82 to T86, K87 to P91, P92 to T96, P97 to K101, P102 to S105, P106 to T110, K111 to P115, P116 to T120, P121 to K125, P126 to T131, K132 to P136, P137 to T141, P142 to K146, P147 to S150, P151 to K155, S157 to P163, P164 to V168, P169 to T174, P175 to V181, P182 to K186, A187 to S229, S258 to T262, P266 to N270, P298 to T302, and P308 to K312.

It belongs to the plant proline-rich protein superfamily. ENOD12 family. Exclusively expressed in roots, particularly in root hairs-containing regions, and especially in root hairs.

The protein resides in the secreted. It localises to the cell wall. In terms of biological role, may contribute to cell wall structure in root hairs. This is Proline-rich protein 3 (PRP3) from Arabidopsis thaliana (Mouse-ear cress).